Consider the following 464-residue polypeptide: tRNA modification GTPase MnmE (464 aa).

Arginine 27, glutamate 89, and arginine 128 together coordinate (6S)-5-formyl-5,6,7,8-tetrahydrofolate. A TrmE-type G domain is found at 225-384 (GLATAIVGRP…LEETIAHLFF (160 aa)). Position 235 (asparagine 235) interacts with K(+). GTP is bound by residues 235-240 (NVGKSS), 254-260 (TDVAGTT), and 279-282 (DTAG). Residue serine 239 coordinates Mg(2+). Positions 254, 256, and 259 each coordinate K(+). Residue threonine 260 participates in Mg(2+) binding. Lysine 464 provides a ligand contact to (6S)-5-formyl-5,6,7,8-tetrahydrofolate.

Belongs to the TRAFAC class TrmE-Era-EngA-EngB-Septin-like GTPase superfamily. TrmE GTPase family. In terms of assembly, homodimer. Heterotetramer of two MnmE and two MnmG subunits. The cofactor is K(+).

The protein resides in the cytoplasm. Exhibits a very high intrinsic GTPase hydrolysis rate. Involved in the addition of a carboxymethylaminomethyl (cmnm) group at the wobble position (U34) of certain tRNAs, forming tRNA-cmnm(5)s(2)U34. The protein is tRNA modification GTPase MnmE of Levilactobacillus brevis (strain ATCC 367 / BCRC 12310 / CIP 105137 / JCM 1170 / LMG 11437 / NCIMB 947 / NCTC 947) (Lactobacillus brevis).